The primary structure comprises 428 residues: 3-phosphoshikimate 1-carboxyvinyltransferase (428 aa).

3-phosphoshikimate is bound by residues lysine 20, serine 21, and arginine 25. A phosphoenolpyruvate-binding site is contributed by lysine 20. Positions 92 and 120 each coordinate phosphoenolpyruvate. 3-phosphoshikimate is bound by residues serine 166, glutamine 168, aspartate 314, and lysine 341. Phosphoenolpyruvate is bound at residue glutamine 168. The active-site Proton acceptor is aspartate 314. Residues arginine 345 and arginine 387 each coordinate phosphoenolpyruvate.

This sequence belongs to the EPSP synthase family. Monomer.

The protein resides in the cytoplasm. The enzyme catalyses 3-phosphoshikimate + phosphoenolpyruvate = 5-O-(1-carboxyvinyl)-3-phosphoshikimate + phosphate. Its pathway is metabolic intermediate biosynthesis; chorismate biosynthesis; chorismate from D-erythrose 4-phosphate and phosphoenolpyruvate: step 6/7. Catalyzes the transfer of the enolpyruvyl moiety of phosphoenolpyruvate (PEP) to the 5-hydroxyl of shikimate-3-phosphate (S3P) to produce enolpyruvyl shikimate-3-phosphate and inorganic phosphate. The sequence is that of 3-phosphoshikimate 1-carboxyvinyltransferase from Listeria welshimeri serovar 6b (strain ATCC 35897 / DSM 20650 / CCUG 15529 / CIP 8149 / NCTC 11857 / SLCC 5334 / V8).